A 441-amino-acid polypeptide reads, in one-letter code: Transcription factor TOXE (441 aa).

Residues 14-40 (TDINERRKLQNRVAQRKYRTRQKTRMK) form a basic DNA-binding region region. The disordered stretch occupies residues 209 to 243 (FEPNDQRKTENLPREPCGSCPSSSHGYSPTSGNPS). Residues 212-221 (NDQRKTENLP) are compositionally biased toward basic and acidic residues. Residues 228–241 (CPSSSHGYSPTSGN) show a composition bias toward polar residues. ANK repeat units lie at residues 289-318 (DQFS…PLDI), 322-351 (SGKT…EMLA), 355-384 (EGNS…SCRE), and 413-440 (EGMT…SANV).

Belongs to the bZIP family. As to quaternary structure, monomer.

The protein localises to the nucleus. Functionally, transcription factor, part of the diffuse TOX2 gene cluster that mediates the biosynthesis of the HC-toxin, cyclic tetrapeptide of structure cyclo(D-Pro-L-Ala-D-Ala-L-Aeo), where Aeo stands for 2-amino-9,10-epoxi-8-oxodecanoic acid. HC-toxin is a determinant of specificity and virulence in the interaction between the producing fungus and its host, maize. TOXE is a pathway-specific transcription factor which coordinates the expression of genes involved in HC-toxin biosynthesis. Binds to the tox-box, a 10-bp motif with the consensus 5'-ATCTCNCGNA-3', which is found in the promoter of all genes involved in HC-toxin biosynthesis. Required for pathogenicity of the fungus on maize. This chain is Transcription factor TOXE, found in Cochliobolus carbonum (Maize leaf spot fungus).